The primary structure comprises 633 residues: Protein CASP (633 aa).

Topologically, residues 1–601 (MAVASEALLQ…LLFSRATRGL (601 aa)) are cytoplasmic. A disordered region spans residues 39–60 (QKTSLDERKELSSKTKEFRKQP). Coiled-coil stretches lie at residues 111–339 (IEAA…LANK) and 369–433 (SLES…VDVE). The chain crosses the membrane as a helical; Anchor for type IV membrane protein span at residues 602–622 (FFMYLILLHLFIMIVLLKLGI). Residues 623–633 (AGNTAYTPMNY) lie on the Lumenal side of the membrane.

This sequence belongs to the CASP family.

It is found in the golgi apparatus membrane. In terms of biological role, may be involved in intra-Golgi transport. The sequence is that of Protein CASP (coy1) from Schizosaccharomyces pombe (strain 972 / ATCC 24843) (Fission yeast).